The sequence spans 502 residues: Probable cytosol aminopeptidase (502 aa).

Mn(2+)-binding residues include Lys270 and Asp275. The active site involves Lys282. The Mn(2+) site is built by Asp293, Asp352, and Glu354. Arg356 is an active-site residue.

Belongs to the peptidase M17 family. Mn(2+) is required as a cofactor.

The protein localises to the cytoplasm. The catalysed reaction is Release of an N-terminal amino acid, Xaa-|-Yaa-, in which Xaa is preferably Leu, but may be other amino acids including Pro although not Arg or Lys, and Yaa may be Pro. Amino acid amides and methyl esters are also readily hydrolyzed, but rates on arylamides are exceedingly low.. It carries out the reaction Release of an N-terminal amino acid, preferentially leucine, but not glutamic or aspartic acids.. In terms of biological role, presumably involved in the processing and regular turnover of intracellular proteins. Catalyzes the removal of unsubstituted N-terminal amino acids from various peptides. This chain is Probable cytosol aminopeptidase, found in Desulfotalea psychrophila (strain LSv54 / DSM 12343).